Consider the following 313-residue polypeptide: Small glutamine-rich tetratricopeptide repeat-containing protein alpha (313 aa).

Residues 69-97 (KELPPDLRSPQETPPSEEDSAEAERLKTE) are disordered. Ser-77 bears the Phosphoserine mark. A Phosphothreonine modification is found at Thr-81. Ser-84 is modified (phosphoserine). TPR repeat units follow at residues 91–124 (AERL…NPAN), 125–158 (AVYF…DPSY), and 159–192 (SKAY…DPDN). Lys-137 carries the post-translational modification N6-acetyllysine. Residue Ser-301 is modified to Phosphoserine. Thr-303 is modified (phosphothreonine). At Ser-305 the chain carries Phosphoserine.

The protein belongs to the SGT family. Homodimer. Homooligomer. Interacts with DNAJC5 and DNAJC5B. Interacts (via TPR repeats) with HSP90AA1. Interacts (via Gln-rich region) with SLC2A1. Interacts with HSP90AB1. Interacts (via TPR repeats) with HSPA8/Hsc70; the interaction is direct. Interacts with BAG6 (via ubiquitin-like domain); interaction prevents interaction between BAG6 and RNF126. Forms a multiprotein complex, at least composed of DNAJB12, DNAJB14, HSPA8/Hsc70 and SGTA; interaction with DNAJB14 and HSPA8/Hsc70 is direct.

It localises to the cytoplasm. Its subcellular location is the nucleus. Its function is as follows. Co-chaperone that binds misfolded and hydrophobic patches-containing client proteins in the cytosol. Mediates their targeting to the endoplasmic reticulum but also regulates their sorting to the proteasome when targeting fails. Functions in tail-anchored/type II transmembrane proteins membrane insertion constituting with ASNA1 and the BAG6 complex a targeting module. Functions upstream of the BAG6 complex and ASNA1, binding more rapidly the transmembrane domain of newly synthesized proteins. It is also involved in the regulation of the endoplasmic reticulum-associated misfolded protein catabolic process via its interaction with BAG6: collaborates with the BAG6 complex to maintain hydrophobic substrates in non-ubiquitinated states. Competes with RNF126 for interaction with BAG6, preventing the ubiquitination of client proteins associated with the BAG6 complex. Binds directly to HSC70 and HSP70 and regulates their ATPase activity. The polypeptide is Small glutamine-rich tetratricopeptide repeat-containing protein alpha (SGTA) (Bos taurus (Bovine)).